The primary structure comprises 703 residues: Calpain-8 (703 aa).

The 300-residue stretch at 45 to 344 folds into the Calpain catalytic domain; that stretch reads LFKDPEFPAC…FSRLEICNLS (300 aa). Catalysis depends on residues Cys-105, His-262, and Asn-286. The domain III stretch occupies residues 356–379; it reads WNLVLFNGHWTRGSTAGGCQNYPA. 3 EF-hand domains span residues 575 to 610, 618 to 640, and 670 to 703; these read FNIN…IQKY, DYNH…AGFT, and IRLE…CVLV. Residues Asp-588, Asn-590, Thr-592, Thr-594, Glu-599, Asp-618, Asn-620, Ser-622, Thr-624, and Glu-629 each coordinate Ca(2+).

The protein belongs to the peptidase C2 family. In terms of assembly, monomer and homooligomer. Interacts with COPS1/GPS1, COPB1, EYA2, NME2, NME4 and TOMM70. Requires Ca(2+) as cofactor. Post-translationally, undergoes autolytic cleavage between Ala-5 and Ala-6 which gives rise to fragments extending from Ala-6 to the C-terminus, Ala-6 to the EF-hand 2 domain and from Ala-6 to the beginning of domain III. Stomach.

It localises to the cytoplasm. It is found in the golgi apparatus. It carries out the reaction Broad endopeptidase specificity.. Functionally, calcium-regulated non-lysosomal thiol-protease. Involved in membrane trafficking in the gastric surface mucus cells (pit cells) and may involve the membrane trafficking of mucus cells via interactions with coat protein. Proteolytically cleaves the beta-subunit of coatomer complex. The protein is Calpain-8 (CAPN8) of Homo sapiens (Human).